We begin with the raw amino-acid sequence, 369 residues long: Cystathionine gamma-synthase (369 aa).

Position 200 is an N6-(pyridoxal phosphate)lysine (Lys-200).

This sequence belongs to the trans-sulfuration enzymes family. Homotetramer. Pyridoxal 5'-phosphate serves as cofactor.

The protein localises to the cytoplasm. It catalyses the reaction O-succinyl-L-homoserine + L-cysteine = L,L-cystathionine + succinate + H(+). In terms of biological role, catalyzes the formation of L-cystathionine from O-succinyl-L-homoserine (OSHS) and L-cysteine, via a gamma-replacement reaction. In the absence of thiol, catalyzes gamma-elimination to form 2-oxobutanoate, succinate and ammonia. This is Cystathionine gamma-synthase (metB) from Haemophilus influenzae (strain ATCC 51907 / DSM 11121 / KW20 / Rd).